A 410-amino-acid chain; its full sequence is Chloride intracellular channel protein 5 (410 aa).

The short motif at 191–194 is the G-site element; sequence CPFS. Residues 193-213 traverse the membrane as a helical segment; it reads FSQRLFMILWLKGVVFNVTTV. The 141-residue stretch at 260–400 folds into the GST C-terminal domain; sequence YPKLAAKHRE…AADSEIELAY (141 aa).

This sequence belongs to the chloride channel CLIC family. In terms of assembly, component of a multimeric complex consisting of several cytoskeletal proteins, including actin, ezrin, alpha-actinin, gelsolin, and IQGAP1. Interacts with AKAP9. Interacts with TPRN. TPRN, CLIC5 and PTPQR form concentric rings at the base of stereocilia and may form a complex. Interacts with EZR, MYO6 and RDX; the proteins may work together as a complex to stabilize linkages between the plasma membrane and subjacent actin cytoskeleton at the stereocilium base. Widely expressed in both fetal and adult human tissues. Isoform 1 is expressed in renal glomeruli endothelial cells and podocytes (at protein level).

It localises to the cytoplasm. The protein localises to the cytoskeleton. It is found in the cell cortex. The protein resides in the membrane. Its subcellular location is the apical cell membrane. It localises to the mitochondrion. The protein localises to the cell projection. It is found in the stereocilium. The protein resides in the golgi apparatus. Its subcellular location is the microtubule organizing center. It localises to the centrosome. It carries out the reaction chloride(in) = chloride(out). It catalyses the reaction Na(+)(in) = Na(+)(out). The catalysed reaction is K(+)(in) = K(+)(out). Its activity is regulated as follows. Inhibited by F-actin. In the soluble state, catalyzes glutaredoxin-like thiol disulfide exchange reactions with reduced glutathione as electron donor. Can insert into membranes and form non-selective ion channels almost equally permeable to Na(+), K(+) and Cl(-). Required for normal hearing. It is necessary for the formation of stereocilia in the inner ear and normal development of the organ of Corti. May play a role in the regulation of transepithelial ion absorption and secretion. Is required for the development and/or maintenance of the proper glomerular endothelial cell and podocyte architecture. Plays a role in formation of the lens suture in the eye, which is important for normal optical properties of the lens. The protein is Chloride intracellular channel protein 5 of Homo sapiens (Human).